Consider the following 164-residue polypeptide: SsrA-binding protein (164 aa).

Belongs to the SmpB family.

It localises to the cytoplasm. Functionally, required for rescue of stalled ribosomes mediated by trans-translation. Binds to transfer-messenger RNA (tmRNA), required for stable association of tmRNA with ribosomes. tmRNA and SmpB together mimic tRNA shape, replacing the anticodon stem-loop with SmpB. tmRNA is encoded by the ssrA gene; the 2 termini fold to resemble tRNA(Ala) and it encodes a 'tag peptide', a short internal open reading frame. During trans-translation Ala-aminoacylated tmRNA acts like a tRNA, entering the A-site of stalled ribosomes, displacing the stalled mRNA. The ribosome then switches to translate the ORF on the tmRNA; the nascent peptide is terminated with the 'tag peptide' encoded by the tmRNA and targeted for degradation. The ribosome is freed to recommence translation, which seems to be the essential function of trans-translation. This Gluconobacter oxydans (strain 621H) (Gluconobacter suboxydans) protein is SsrA-binding protein.